Here is a 415-residue protein sequence, read N- to C-terminus: Serine/threonine transporter SstT (415 aa).

A run of 8 helical transmembrane segments spans residues 23–43, 47–67, 85–105, 144–164, 181–201, 220–240, 303–323, and 333–353; these read ILVGLVLGILLAWLSKPAAIA, LGTLFVGALKAVAPVLVLMLV, ILWLYLLGTFSAALTAVLFSF, ALLKGNYIGILVWAVGLGFAL, AVTFMVKLVIRFAPIGIFGLV, LMVLIGCMFLVALVINPLIVF, GAAITITVLTLAAVHTLGIAV, and VVASLCACGASGVAGGSLLLI.

It belongs to the dicarboxylate/amino acid:cation symporter (DAACS) (TC 2.A.23) family.

It localises to the cell inner membrane. The catalysed reaction is L-serine(in) + Na(+)(in) = L-serine(out) + Na(+)(out). It catalyses the reaction L-threonine(in) + Na(+)(in) = L-threonine(out) + Na(+)(out). Its function is as follows. Involved in the import of serine and threonine into the cell, with the concomitant import of sodium (symport system). This is Serine/threonine transporter SstT from Cronobacter sakazakii (strain ATCC BAA-894) (Enterobacter sakazakii).